We begin with the raw amino-acid sequence, 1025 residues long: Multidrug resistance protein MdtC (1025 aa).

A run of 12 helical transmembrane segments spans residues 3-23 (FFALFIYRPVATILLSVAITL), 333-353 (EVEQTLIISVALVILVVFLFL), 360-380 (IIPAVAVPVSLIGTFAAMYLC), 387-407 (LSLMALTIATGFVVDDAIVVL), 431-451 (VGFTVLSMSLSLVAVFLPLLL), 463-483 (FAVTLSVAIGISLLVSLTLTP), 528-548 (LVGVVLLGTIALNIWLYISIP), 853-873 (VILIIAAIATVYIVLGILYES), 875-895 (VHPLTILSTLPSAGVGALLAL), 897-917 (LFNAPFSLIALIGIMLLIGIV), 953-973 (PIMMTTLAALFGALPLVLSGG), and 984-1004 (ITIVGGLVMSQLLTLYTTPVV).

The protein belongs to the resistance-nodulation-cell division (RND) (TC 2.A.6) family. MdtC subfamily. Part of a tripartite efflux system composed of MdtA, MdtB and MdtC. MdtC forms a heteromultimer with MdtB.

The protein localises to the cell inner membrane. In terms of biological role, the MdtABC tripartite complex confers resistance against novobiocin and deoxycholate. This Escherichia coli O17:K52:H18 (strain UMN026 / ExPEC) protein is Multidrug resistance protein MdtC.